The sequence spans 190 residues: MGFFSSLSSLFGLGKKDVNIVVVGLDNSGKTTILNQLKTPETRSQQIVPTVGHVVTNFSTQNLSFHAFDMAGQMKYRSTWESYFHSSQGVIFVLDSSDRLRMELLKDELMMVMEHKDVVSRGIPIVILANKMDIPGAMTASDITVALGLNLYRSGTWSIHSTCALTGDGLDKAMQQLSAEITKYMESRRT.

A lipid anchor (N-myristoyl glycine) is attached at Gly2. GTP-binding positions include 24-31 (GLDNSGKT), 69-73 (DMAGQ), and 130-133 (NKMD).

Belongs to the small GTPase superfamily. Arf family. As to expression, specifically expressed in ciliated cells.

Its subcellular location is the cytoplasm. This Caenorhabditis elegans protein is ADP-ribosylation factor-like protein 6.